The following is a 256-amino-acid chain: Alcohol dehydrogenase (256 aa).

An NAD(+)-binding site is contributed by 12 to 35 (FVAGLGGIGLDTSKELLKRDLKNL). Substrate is bound at residue Ser-140. Tyr-153 functions as the Proton acceptor in the catalytic mechanism.

This sequence belongs to the short-chain dehydrogenases/reductases (SDR) family. Homodimer.

It carries out the reaction a primary alcohol + NAD(+) = an aldehyde + NADH + H(+). The enzyme catalyses a secondary alcohol + NAD(+) = a ketone + NADH + H(+). This is Alcohol dehydrogenase (Adh) from Drosophila sechellia (Fruit fly).